Reading from the N-terminus, the 308-residue chain is Coenzyme PQQ synthesis protein B (308 aa).

It belongs to the PqqB family.

It functions in the pathway cofactor biosynthesis; pyrroloquinoline quinone biosynthesis. In terms of biological role, may be involved in the transport of PQQ or its precursor to the periplasm. This is Coenzyme PQQ synthesis protein B from Rhodopseudomonas palustris (strain TIE-1).